Consider the following 390-residue polypeptide: Terminal nucleotidyltransferase 5C (390 aa).

Belongs to the TENT family.

Its subcellular location is the nucleus. The protein localises to the cytoplasm. It localises to the cytoskeleton. It is found in the microtubule organizing center. The protein resides in the centrosome. It catalyses the reaction RNA(n) + ATP = RNA(n)-3'-adenine ribonucleotide + diphosphate. Functionally, catalyzes the transfer of one adenosine molecule from an ATP to an mRNA poly(A) tail bearing a 3'-OH terminal group and enhances mRNA stability and gene expression. This chain is Terminal nucleotidyltransferase 5C, found in Gallus gallus (Chicken).